We begin with the raw amino-acid sequence, 994 residues long: Bifunctional glutamine synthetase adenylyltransferase/adenylyl-removing enzyme (994 aa).

Residues 1–487 (MVVTKLATQR…LHTKLFYQPL (487 aa)) form an adenylyl removase region. The interval 492-994 (GPTGLEIAHG…KAVVRKVFGS (503 aa)) is adenylyl transferase.

Belongs to the GlnE family. Mg(2+) serves as cofactor.

It catalyses the reaction [glutamine synthetase]-O(4)-(5'-adenylyl)-L-tyrosine + phosphate = [glutamine synthetase]-L-tyrosine + ADP. The catalysed reaction is [glutamine synthetase]-L-tyrosine + ATP = [glutamine synthetase]-O(4)-(5'-adenylyl)-L-tyrosine + diphosphate. Functionally, involved in the regulation of glutamine synthetase GlnA, a key enzyme in the process to assimilate ammonia. When cellular nitrogen levels are high, the C-terminal adenylyl transferase (AT) inactivates GlnA by covalent transfer of an adenylyl group from ATP to specific tyrosine residue of GlnA, thus reducing its activity. Conversely, when nitrogen levels are low, the N-terminal adenylyl removase (AR) activates GlnA by removing the adenylyl group by phosphorolysis, increasing its activity. The regulatory region of GlnE binds the signal transduction protein PII (GlnB) which indicates the nitrogen status of the cell. In Mycobacterium tuberculosis (strain CDC 1551 / Oshkosh), this protein is Bifunctional glutamine synthetase adenylyltransferase/adenylyl-removing enzyme.